A 194-amino-acid chain; its full sequence is NADPH-flavin oxidoreductase (194 aa).

It belongs to the non-flavoprotein flavin reductase family. As to quaternary structure, homodimer. It can form an isobutylamine N-hydroxylase two component enzyme system formed of a flavin reductase component (VlmR) and a monooxygenase component (VlmH).

The catalysed reaction is FADH2 + NADP(+) = FAD + NADPH + 2 H(+). It carries out the reaction FMNH2 + NADP(+) = FMN + NADPH + 2 H(+). Involved in the biosynthesis of the azoxy antibiotic valanimycin, which has an antitumor activity. Catalyzes the reduction of FAD/FMN to FADH(2)/FMNH(2) which are subsequently used for the hydroxylation of isobutylamine by the isobutylamine N-hydroxylase VlmH. It can reduce either FAD or flavin mononucleotide (FMN) but prefers FAD. The enzyme has a strong preference for NADPH as acceptor. The protein is NADPH-flavin oxidoreductase of Streptomyces viridifaciens.